Consider the following 203-residue polypeptide: Large ribosomal subunit protein uL13 (203 aa).

Alanine 2 is modified (N-acetylalanine). Arginine 59 carries the citrulline modification. Serine 77 carries the post-translational modification Phosphoserine. Arginine 140 carries the post-translational modification Citrulline. Lysine 191 is modified (N6-acetyllysine).

This sequence belongs to the universal ribosomal protein uL13 family. In terms of assembly, component of the 60S ribosome. Component of the GAIT complex. Interacts with EIF4G1. Phosphorylation at Ser-77 upon interferon-gamma treatment in monocytes involves a DAPK1-DAPK3 kinase cascade and is causing release from the ribosome, association with the GAIT complex and subsequent involvement in transcript-selective translation inhibition. In terms of processing, citrullinated by PADI4.

It localises to the cytoplasm. Associated with ribosomes but is not required for canonical ribosome function and has extra-ribosomal functions. Component of the GAIT (gamma interferon-activated inhibitor of translation) complex which mediates interferon-gamma-induced transcript-selective translation inhibition in inflammation processes. Upon interferon-gamma activation and subsequent phosphorylation dissociates from the ribosome and assembles into the GAIT complex which binds to stem loop-containing GAIT elements in the 3'-UTR of diverse inflammatory mRNAs (such as ceruplasmin) and suppresses their translation. In the GAIT complex interacts with m7G cap-bound eIF4G at or near the eIF3-binding site and blocks the recruitment of the 43S ribosomal complex. Involved in methylation of rRNA. The protein is Large ribosomal subunit protein uL13 (RPL13A) of Oryctolagus cuniculus (Rabbit).